Reading from the N-terminus, the 122-residue chain is uncharacterized protein (122 aa).

Residues 79–114 are a coiled coil; that stretch reads VIEDVASAIKEMMESAAKDLDKIEEVIKESLEKYLR.

This is an uncharacterized protein from Archaeoglobus fulgidus (strain ATCC 49558 / DSM 4304 / JCM 9628 / NBRC 100126 / VC-16).